We begin with the raw amino-acid sequence, 441 residues long: Amino-acid acetyltransferase (441 aa).

The N-acetyltransferase domain maps to 295-434 (EQVRRATIND…QALYNYQRRS (140 aa)).

The protein belongs to the acetyltransferase family. ArgA subfamily. Homohexamer.

The protein localises to the cytoplasm. The enzyme catalyses L-glutamate + acetyl-CoA = N-acetyl-L-glutamate + CoA + H(+). The protein operates within amino-acid biosynthesis; L-arginine biosynthesis; N(2)-acetyl-L-ornithine from L-glutamate: step 1/4. This Serratia proteamaculans (strain 568) protein is Amino-acid acetyltransferase.